A 999-amino-acid chain; its full sequence is Desmoglein-3 (999 aa).

The N-terminal stretch at 1 to 23 is a signal peptide; sequence MMGLFPRTTGALAIFVVVILVHG. Positions 24–49 are excised as a propeptide; the sequence is ELRIETKGQYDEEEMTMQQAKRRQKR. 4 consecutive Cadherin domains span residues 50–158, 159–268, 269–383, and 386–499; these read EWVK…PVFS, QQIF…PMFR, DSQY…GIAF, and ASKT…VLEK. The Extracellular portion of the chain corresponds to 50 to 615; it reads EWVKFAKPCR…TRYGRPHSGR (566 aa). N-linked (GlcNAc...) asparagine glycans are attached at residues Asn-110 and Asn-180. N-linked (GlcNAc...) asparagine glycosylation is found at Asn-459 and Asn-545. Residues 616–640 traverse the membrane as a helical segment; sequence LGPAAIGLLLLGLLLLLLAPLLLLT. Residues 641–999 are Cytoplasmic-facing; the sequence is CDCGAGSTGG…CTEDPCSRLI (359 aa). Residues 642–714 form a required for interaction with CTNND1 and localization at cell-cell junctions region; sequence DCGAGSTGGV…NTYARGTAVE (73 aa). Desmoglein repeat repeat units lie at residues 910–935 and 936–966; these read LSTS…LVTE and TYSA…ERVI.

As to quaternary structure, homodimer. Part of a complex that contains DSG3, PKP1, YAP1 and YWHAG; the complex is required for localization of DSG3 and YAP1 to the cell membrane in keratinocytes. Interacts with PKP2. Interacts with CTNND1; the interaction facilitates DSG3 localization and retention at cell-cell junctions. Interacts with CDH1; the interaction is required for CDH1 localization to developing adherens junctions. Interacts with RAC1; the interaction is required for DSG3 translocation to cell-cell junctions, organization of cortical F-actin bundles and actin anchoring at cell-cell junctions. Interacts with DSC3; the interaction may limit the interaction of DSC3 with p38MAPK family members and therefore repress p38MAPK signaling activation. As to expression, expressed throughout the basal and spinous layer of the epidermis with weak expression in the granular layer (at protein level). Expressed in skin and mucosa (at protein level). Expressed in the basal layer of the outer root sheath of the telogen hair club, specifically at the cell membrane between the apex of the cells and the surrounding hair club (at protein level). Expression is less abundant between the lateral margins of the outer root sheath basal cells (at protein level). Also expressed in the tongue, tonsil and esophagus.

The protein resides in the cell membrane. It localises to the cell junction. Its subcellular location is the desmosome. It is found in the cytoplasm. The protein localises to the tight junction. In terms of biological role, a component of desmosome cell-cell junctions which are required for positive regulation of cellular adhesion. Required for adherens and desmosome junction assembly in response to mechanical force in keratinocytes. Required for desmosome-mediated cell-cell adhesion of cells surrounding the telogen hair club and the basal layer of the outer root sheath epithelium, consequently is essential for the anchoring of telogen hairs in the hair follicle. Required for the maintenance of the epithelial barrier via promoting desmosome-mediated intercellular attachment of suprabasal epithelium to basal cells. May play a role in the protein stability of the desmosome plaque components DSP, JUP, PKP1, PKP2 and PKP3. Required for YAP1 localization at the plasma membrane in keratinocytes in response to mechanical strain, via the formation of an interaction complex composed of DSG3, PKP1 and YWHAG. May also be involved in the positive regulation of YAP1 target gene transcription and as a result cell proliferation. Positively regulates cellular contractility and cell junction formation via organization of cortical F-actin bundles and anchoring of actin to tight junctions, in conjunction with RAC1. The cytoplasmic pool of DSG3 is required for the localization of CDH1 and CTNNB1 at developing adherens junctions, potentially via modulation of SRC activity. Inhibits keratinocyte migration via suppression of p38MAPK signaling, may therefore play a role in moderating wound healing. This Homo sapiens (Human) protein is Desmoglein-3.